Reading from the N-terminus, the 822-residue chain is Lysine-specific histone demethylase 2 (822 aa).

Over residues Met1–Lys11 the composition is skewed to basic residues. The interval Met1–Glu47 is disordered. Residues Ser13, Ser17, and Ser26 each carry the phosphoserine modification. The Zn(2+) site is built by Cys53, Cys58, Cys65, Cys73, His84, His90, Cys92, Cys95, Cys142, Cys147, Cys169, and Cys185. The CW-type zinc finger occupies Asp133 to Val193. Ser247 bears the Phosphoserine mark. The segment at Tyr273 to Asp292 is GLYR1-binding. An SWIRM domain is found at Pro275–Gln373. Lys383–Val439 contacts FAD. Histone H3-binding stretches follow at residues Ile438 to Leu467, Phe487 to Arg498, and Phe538 to His572. Residues Phe564–Ala566 are GLYR1-binding. FAD contacts are provided by residues Val598, Glu795, and Gln803 to Val805. Positions Asn798–Arg814 are GLYR1-binding.

Belongs to the flavin monoamine oxidase family. Interacts with its cofactor GLYR1 at nucleosomes; this interaction stimulates H3K4me1 and H3K4me2 demethylation. In contrast to KDM1A, does not form a complex with RCOR1/CoREST. Possible accessory component of the polycomb repressive deubiquitinase (PR-DUB) complex, at least composed of BAP1, one of ASXL1, ASXL2 or (probably) ASXL3 and one of MBD5 or MBD6. The PR-DUB core associates with a number of accessory proteins, including FOXK1, FOXK2, KDM1B, HCFC1 and OGT; KDM1B specifically associates with ASXL2 PR-DUB complexes. FAD serves as cofactor. It depends on Zn(2+) as a cofactor.

Its subcellular location is the nucleus. The protein localises to the chromosome. It carries out the reaction N(6),N(6)-dimethyl-L-lysyl(4)-[histone H3] + 2 A + 2 H2O = L-lysyl(4)-[histone H3] + 2 formaldehyde + 2 AH2. It catalyses the reaction N(6)-methyl-L-lysyl(4)-[histone H3] + A + H2O = L-lysyl(4)-[histone H3] + formaldehyde + AH2. With respect to regulation, histone H3K4me1 and H3K4me2 demethylase activity is inhibited by DNA, this inhibition is released in complex with GLYR1. Its function is as follows. Histone demethylase that demethylates 'Lys-4' of histone H3, a specific tag for epigenetic transcriptional activation, thereby acting as a corepressor. Required for de novo DNA methylation of a subset of imprinted genes during oogenesis. Acts by oxidizing the substrate by FAD to generate the corresponding imine that is subsequently hydrolyzed. Demethylates both mono- and di-methylated 'Lys-4' of histone H3. Has no effect on tri-methylated 'Lys-4', mono-, di- or tri-methylated 'Lys-9', mono-, di- or tri-methylated 'Lys-27', mono-, di- or tri-methylated 'Lys-36' of histone H3, or on mono-, di- or tri-methylated 'Lys-20' of histone H4. Alone, it is unable to demethylate H3K4me on nucleosomes and requires the presence of GLYR1 to achieve such activity, they form a multifunctional enzyme complex that modifies transcribed chromatin and facilitates Pol II transcription through nucleosomes. The polypeptide is Lysine-specific histone demethylase 2 (Homo sapiens (Human)).